The primary structure comprises 410 residues: MAPRTIVKVDLNKPAWEQPNLHNRWHPDIPFAESIDEGETVKIECLDWTGGQIKNDDSAEDIKNVDLTRIHYLSGPFEIKGAEPGDVLVVEIQDVQPLENQPWGYSGIFAKENGGGFLDEHYPKAAKAVFDFEGIFCSSRHIPGVRFPGLIHPGIIGTAPSKEILAEWNRREGALVAENPHSTHVMAQLPNASYAFAGILADEKLSATVASEGARTIPGRPENGGNCDIKNLSRGSKVFLPVHVPGAKLSIGDLHFSQGDGEISFCGAIEMAGSITIKCKILKNGISDLAMKSPMYLPGPVEPHFSPSRYLTFEGFSVDESGKQHYLCTTTAYRQTCLRVIEYFRRFGYNDYQLYLLLSCAPIQGHVAGIVDIPNSCTTIGVPMDIFEFDVSPNGKAKIIDLGSCAFANS.

Belongs to the acetamidase/formamidase family. In terms of assembly, homotrimer.

The protein resides in the cytoplasm. It localises to the nucleus. The catalysed reaction is formamide + H2O = formate + NH4(+). Its function is as follows. Hydrolyzes formamide with the production of ammonia which can be used as a source of nitrogen for growth. May also act on acetamide, propanamide and butanamide. The sequence is that of Putative formamidase C869.04 from Schizosaccharomyces pombe (strain 972 / ATCC 24843) (Fission yeast).